The chain runs to 60 residues: Cytotoxin 5 (60 aa).

4 cysteine pairs are disulfide-bonded: C3–C21, C14–C38, C42–C53, and C54–C59.

It belongs to the three-finger toxin family. Short-chain subfamily. Type IA cytotoxin sub-subfamily. Monomer in solution; Homodimer and oligomer in the presence of negatively charged lipids forming a pore with a size ranging between 20 and 30 Angstroms. In terms of tissue distribution, expressed by the venom gland.

The protein resides in the secreted. It is found in the target cell membrane. Shows cytolytic activity on many different cells by forming pore in lipid membranes. In vivo, increases heart rate or kills the animal by cardiac arrest. In addition, it binds to heparin with high affinity, interacts with Kv channel-interacting protein 1 (KCNIP1) in a calcium-independent manner, and binds to integrin alpha-V/beta-3 (ITGAV/ITGB3) with moderate affinity. This chain is Cytotoxin 5, found in Naja kaouthia (Monocled cobra).